A 328-amino-acid polypeptide reads, in one-letter code: tRNA dimethylallyltransferase (328 aa).

An ATP-binding site is contributed by 19 to 26; it reads GPTASGKT. 21-26 contributes to the substrate binding site; that stretch reads TASGKT. Interaction with substrate tRNA stretches follow at residues 50 to 53, 174 to 178, and 257 to 262; these read DSAL, QRIQR, and RCVGYR.

This sequence belongs to the IPP transferase family. Monomer. Mg(2+) is required as a cofactor.

The enzyme catalyses adenosine(37) in tRNA + dimethylallyl diphosphate = N(6)-dimethylallyladenosine(37) in tRNA + diphosphate. Its function is as follows. Catalyzes the transfer of a dimethylallyl group onto the adenine at position 37 in tRNAs that read codons beginning with uridine, leading to the formation of N6-(dimethylallyl)adenosine (i(6)A). The protein is tRNA dimethylallyltransferase of Leptothrix cholodnii (strain ATCC 51168 / LMG 8142 / SP-6) (Leptothrix discophora (strain SP-6)).